The sequence spans 1045 residues: Fibrosin-1-like protein (1045 aa).

The span at 1–12 shows a compositional bias: basic residues; that stretch reads MEAKVRPSRRSR. Disordered stretches follow at residues 1–86 and 99–315; these read MEAK…DGFA and DMAL…THVP. The span at 13 to 28 shows a compositional bias: basic and acidic residues; the sequence is AQRDRGRRREAARDAR. A compositionally biased stretch (low complexity) spans 48–63; that stretch reads GLRGAPPRGAAPAPRT. The span at 99 to 123 shows a compositional bias: basic and acidic residues; that stretch reads DMALKPHERKEKWERRLIKKPRESE. Polar residues predominate over residues 183-197; the sequence is EATSSRDPLSDSSAH. Over residues 270-280 the composition is skewed to pro residues; sequence HAAPCPGPPPG. Serine 340 is subject to Phosphoserine. A compositionally biased stretch (basic residues) spans 443–457; the sequence is QHTHQHTHQHTHQHQ. Disordered regions lie at residues 443–462 and 719–753; these read QHTH…TFAP and EGSS…PKSV. Residues 741-750 show a composition bias toward pro residues; the sequence is PSFPAPPPWP. At serine 790 the chain carries Phosphoserine. Disordered stretches follow at residues 809 to 880 and 910 to 961; these read ELGR…APLQ and AAAP…PALD. Over residues 817-837 the composition is skewed to basic and acidic residues; the sequence is AEREAEPRVKESRSPAKEEAA. Residue lysine 858 forms a Glycyl lysine isopeptide (Lys-Gly) (interchain with G-Cter in SUMO2) linkage. A compositionally biased stretch (low complexity) spans 910–922; it reads AAAPAPGSAALLE. The segment covering 923–949 has biased composition (basic and acidic residues); the sequence is PPERPYRDREPHGYSPERLRGELERAR. Residues serine 937 and serine 977 each carry the phosphoserine modification. Threonine 989 and threonine 1010 each carry phosphothreonine. The interval 991–1045 is disordered; it reads PAAAALGAPPPLVTAAGPPTPPGPPRSRTTPLGGLGPGEARDYSPSRNPPEVEAR. A compositionally biased stretch (pro residues) spans 998–1015; the sequence is APPPLVTAAGPPTPPGPP. Residues 1029–1045 show a composition bias toward basic and acidic residues; that stretch reads EARDYSPSRNPPEVEAR.

Belongs to the AUTS2 family.

This Homo sapiens (Human) protein is Fibrosin-1-like protein (FBRSL1).